The sequence spans 149 residues: Probable flagellum biosynthesis repressor protein FlbT (149 aa).

Belongs to the FlbT family.

Its function is as follows. Has a post-transcriptional repressor function in flagellum biogenesis. Associates with the 5'-UTR of fljK mRNA and promotes its degradation. This is Probable flagellum biosynthesis repressor protein FlbT from Rhizobium etli (strain ATCC 51251 / DSM 11541 / JCM 21823 / NBRC 15573 / CFN 42).